The following is a 150-amino-acid chain: Arginine repressor (150 aa).

It belongs to the ArgR family.

It localises to the cytoplasm. The protein operates within amino-acid biosynthesis; L-arginine biosynthesis [regulation]. In terms of biological role, regulates arginine biosynthesis genes. In Ruminiclostridium cellulolyticum (strain ATCC 35319 / DSM 5812 / JCM 6584 / H10) (Clostridium cellulolyticum), this protein is Arginine repressor.